Reading from the N-terminus, the 657-residue chain is tRNA 5-methylaminomethyl-2-thiouridine biosynthesis bifunctional protein MnmC (657 aa).

Positions 1–233 (MPRGLILATP…KRDMTVAAFP (233 aa)) are tRNA (mnm(5)s(2)U34)-methyltransferase. Residues 256–657 (LGAGLAGCSV…RALRHGKHAA (402 aa)) are FAD-dependent cmnm(5)s(2)U34 oxidoreductase.

The protein in the N-terminal section; belongs to the methyltransferase superfamily. tRNA (mnm(5)s(2)U34)-methyltransferase family. In the C-terminal section; belongs to the DAO family. The cofactor is FAD.

It localises to the cytoplasm. It carries out the reaction 5-aminomethyl-2-thiouridine(34) in tRNA + S-adenosyl-L-methionine = 5-methylaminomethyl-2-thiouridine(34) in tRNA + S-adenosyl-L-homocysteine + H(+). Functionally, catalyzes the last two steps in the biosynthesis of 5-methylaminomethyl-2-thiouridine (mnm(5)s(2)U) at the wobble position (U34) in tRNA. Catalyzes the FAD-dependent demodification of cmnm(5)s(2)U34 to nm(5)s(2)U34, followed by the transfer of a methyl group from S-adenosyl-L-methionine to nm(5)s(2)U34, to form mnm(5)s(2)U34. This is tRNA 5-methylaminomethyl-2-thiouridine biosynthesis bifunctional protein MnmC from Ralstonia nicotianae (strain ATCC BAA-1114 / GMI1000) (Ralstonia solanacearum).